Reading from the N-terminus, the 341-residue chain is UDP-3-O-acylglucosamine N-acyltransferase (341 aa).

H240 (proton acceptor) is an active-site residue.

This sequence belongs to the transferase hexapeptide repeat family. LpxD subfamily. Homotrimer.

It catalyses the reaction a UDP-3-O-[(3R)-3-hydroxyacyl]-alpha-D-glucosamine + a (3R)-hydroxyacyl-[ACP] = a UDP-2-N,3-O-bis[(3R)-3-hydroxyacyl]-alpha-D-glucosamine + holo-[ACP] + H(+). Its pathway is bacterial outer membrane biogenesis; LPS lipid A biosynthesis. Functionally, catalyzes the N-acylation of UDP-3-O-acylglucosamine using 3-hydroxyacyl-ACP as the acyl donor. Is involved in the biosynthesis of lipid A, a phosphorylated glycolipid that anchors the lipopolysaccharide to the outer membrane of the cell. This chain is UDP-3-O-acylglucosamine N-acyltransferase, found in Cellvibrio japonicus (strain Ueda107) (Pseudomonas fluorescens subsp. cellulosa).